A 425-amino-acid polypeptide reads, in one-letter code: Trigger factor (425 aa).

In terms of domain architecture, PPIase FKBP-type spans 163 to 248; that stretch reads GDTAVIDFEG…VHEIKTKELP (86 aa).

The protein belongs to the FKBP-type PPIase family. Tig subfamily.

It is found in the cytoplasm. It catalyses the reaction [protein]-peptidylproline (omega=180) = [protein]-peptidylproline (omega=0). Its function is as follows. Involved in protein export. Acts as a chaperone by maintaining the newly synthesized protein in an open conformation. Functions as a peptidyl-prolyl cis-trans isomerase. This chain is Trigger factor, found in Bacillus anthracis (strain A0248).